The chain runs to 997 residues: Protein Smaug (997 aa).

A compositionally biased stretch (polar residues) spans 1-37; it reads MKYATGTDNAMTSGISGQTNNSNSASTEMQPTTSTPT. Disordered regions lie at residues 1–69 and 329–370; these read MKYA…QSQP and LCPA…GSSS. 2 stretches are compositionally biased toward low complexity: residues 44 to 69 and 329 to 338; these read TPTATTTATYANGNPNPNANPSQSQP and LCPASGSRSS. Residues Ser-564 and Ser-575 each carry the phosphoserine modification. The tract at residues 583 to 763 is interaction with cup; the sequence is EFKPNYIKFH…KDLKFKLSKM (181 aa). An SAM domain is found at 600-654; sequence GIGLWLKSLRLHKYIELFKNMTYEEMLLITEDFLQSVGVTKGASHKLALCIEKLK. Disordered regions lie at residues 773–892 and 944–972; these read HVKP…MQQM and GSSDNLGLERNQQPQQQQRKLSGGVTSAE. 2 stretches are compositionally biased toward polar residues: residues 802-822 and 854-864; these read NGSNDRINNRKNSNDMLNFSL and HQPQYKSSSYP. Ser-970 is subject to Phosphoserine.

Belongs to the SMAUG family. As to quaternary structure, interacts with oskar (osk). Binds to the 3'-UTR of nos. Interacts with cup, which in turn recruits eIF4-E, leading to an indirect interaction between smg and eIF4-E that prevents mRNA translation.

It localises to the cytoplasm. Translation regulator that binds to the 3'-UTR of specific mRNAs such as nanos (nos) and prevent their translation. Prevents translation of unlocalized nos in the bulk cytoplasm via the recruitment of cup. In Drosophila erecta (Fruit fly), this protein is Protein Smaug.